Consider the following 263-residue polypeptide: MPEGPEIRRAADNLEAAIKGKPLTDVWFAFAQLKPYESQLTGQLVTRIETRGKALLTHFSNGLTLYSHNQLYGVWRVIDTGEIPQTTRILRVRLQTADKTILLYSASDIEMLTAEQLTTHPFLQRVGPDVLDARLTPEEVKARLLSPRFRNRQFSGLLLDQAFLAGLGNYLRVEILWQVGLTGQHKAKDLNEAQLNALSHALLDIPRLSYTTRGQADENKHHGALFRFKVFHRDGEVCERCGGIIEKTTLSSRPFYWCPHCQK.

Catalysis depends on Pro-2, which acts as the Schiff-base intermediate with DNA. Glu-3 (proton donor) is an active-site residue. Residue Lys-53 is the Proton donor; for beta-elimination activity of the active site. The DNA site is built by Gln-70, Arg-125, and Asn-169. An FPG-type zinc finger spans residues 229 to 263; sequence KVFHRDGEVCERCGGIIEKTTLSSRPFYWCPHCQK. The active-site Proton donor; for delta-elimination activity is the Arg-253.

Belongs to the FPG family. The cofactor is Zn(2+).

It catalyses the reaction 2'-deoxyribonucleotide-(2'-deoxyribose 5'-phosphate)-2'-deoxyribonucleotide-DNA = a 3'-end 2'-deoxyribonucleotide-(2,3-dehydro-2,3-deoxyribose 5'-phosphate)-DNA + a 5'-end 5'-phospho-2'-deoxyribonucleoside-DNA + H(+). In terms of biological role, involved in base excision repair of DNA damaged by oxidation or by mutagenic agents. Acts as a DNA glycosylase that recognizes and removes damaged bases. Has a preference for oxidized pyrimidines, such as thymine glycol, 5,6-dihydrouracil and 5,6-dihydrothymine. Has AP (apurinic/apyrimidinic) lyase activity and introduces nicks in the DNA strand. Cleaves the DNA backbone by beta-delta elimination to generate a single-strand break at the site of the removed base with both 3'- and 5'-phosphates. This is Endonuclease 8 from Salmonella newport (strain SL254).